The sequence spans 563 residues: Membrane protein insertase YidC (563 aa).

The helical transmembrane segment at 6 to 26 (TILWMIFSFSLLLLWNNWQIH) threads the bilayer. The interval 36-68 (PPASSAASPAEGQQAAANGQAATPSVPTTPAAA) is disordered. Transmembrane regions (helical) follow at residues 373–393 (WGWA…PLAA), 443–463 (LPMV…LASV), 482–502 (PYFI…KLNP), and 512–532 (VMMI…AGLV).

This sequence belongs to the OXA1/ALB3/YidC family. Type 1 subfamily. As to quaternary structure, interacts with the Sec translocase complex via SecD. Specifically interacts with transmembrane segments of nascent integral membrane proteins during membrane integration.

The protein localises to the cell inner membrane. Its function is as follows. Required for the insertion and/or proper folding and/or complex formation of integral membrane proteins into the membrane. Involved in integration of membrane proteins that insert both dependently and independently of the Sec translocase complex, as well as at least some lipoproteins. Aids folding of multispanning membrane proteins. This is Membrane protein insertase YidC from Bordetella petrii (strain ATCC BAA-461 / DSM 12804 / CCUG 43448).